A 709-amino-acid polypeptide reads, in one-letter code: Cell adhesion molecule CEACAM3 (709 aa).

Residues 1–34 form the signal peptide; that stretch reads MELSSVLPCKRCTPWRGLLLTASLLTCWLLPTTA. Ig-like V-type domains lie at 35–142, 155–262, 275–382, 393–500, and 509–616; these read QVSI…HVYF, QLSI…QVDT, QLTV…QVNT, LLTI…SVHT, and QLVI…HIYK. Residues N73, N86, N103, N110, N133, N207, N224, N231, N327, N344, N351, N381, N462, N561, N578, and N585 are each glycosylated (N-linked (GlcNAc...) asparagine). Residues 631–695 form the Ig-like C2-type domain; it reads RVKSSVVLTC…YRCEVSNPVS (65 aa).

The protein belongs to the immunoglobulin superfamily. CEA family. Expression detected only in placenta.

In terms of biological role, possibly involved in cell adhesion. In Rattus norvegicus (Rat), this protein is Cell adhesion molecule CEACAM3.